The primary structure comprises 56 residues: Large ribosomal subunit protein uL30 (56 aa).

It belongs to the universal ribosomal protein uL30 family. As to quaternary structure, part of the 50S ribosomal subunit.

The protein is Large ribosomal subunit protein uL30 of Oleidesulfovibrio alaskensis (strain ATCC BAA-1058 / DSM 17464 / G20) (Desulfovibrio alaskensis).